We begin with the raw amino-acid sequence, 106 residues long: Large ribosomal subunit protein uL24 (106 aa).

It belongs to the universal ribosomal protein uL24 family. Part of the 50S ribosomal subunit.

Its function is as follows. One of two assembly initiator proteins, it binds directly to the 5'-end of the 23S rRNA, where it nucleates assembly of the 50S subunit. One of the proteins that surrounds the polypeptide exit tunnel on the outside of the subunit. In Alkalilimnicola ehrlichii (strain ATCC BAA-1101 / DSM 17681 / MLHE-1), this protein is Large ribosomal subunit protein uL24.